A 507-amino-acid polypeptide reads, in one-letter code: 25-hydroxyvitamin D-1 alpha hydroxylase, mitochondrial (507 aa).

Cys-454 contacts heme.

It belongs to the cytochrome P450 family. Heme serves as cofactor. In terms of tissue distribution, kidney.

It is found in the mitochondrion membrane. The catalysed reaction is calcidiol + 2 reduced [adrenodoxin] + O2 + 2 H(+) = calcitriol + 2 oxidized [adrenodoxin] + H2O. It carries out the reaction secalciferol + 2 reduced [adrenodoxin] + O2 + 2 H(+) = calcitetrol + 2 oxidized [adrenodoxin] + H2O. It catalyses the reaction 25-hydroxy-24-oxocalciol + 2 reduced [adrenodoxin] + O2 + 2 H(+) = (1S)-1,25-dihydroxy-24-oxocalciol + 2 oxidized [adrenodoxin] + H2O. The enzyme catalyses 25-hydroxyvitamin D2 + 2 reduced [adrenodoxin] + O2 + 2 H(+) = 1alpha,25-dihydroxyvitamin D2 + 2 oxidized [adrenodoxin] + H2O. It participates in hormone biosynthesis; vitamin D biosynthesis. Activated by cardiolipin and dioleoyl phosphatidylethanolamine (DOPE), phospholipids found in the inner mitochondrial membrane. Inhibited by high substrate concentration. Functionally, a cytochrome P450 monooxygenase involved in vitamin D metabolism and in calcium and phosphorus homeostasis. Catalyzes the rate-limiting step in the activation of vitamin D in the kidney, namely the hydroxylation of 25-hydroxyvitamin D3/calcidiol at the C1-alpha position to form the hormonally active form of vitamin D3, 1alpha,25-dihydroxyvitamin D3/calcitriol that acts via the vitamin D receptor (VDR). Has 1-alpha-hydroxylase activity on vitamin D intermediates of the CYP24A1-mediated inactivation pathway. Converts 24R,25-dihydroxyvitamin D3/secalciferol to 1-alpha,24,25-trihydroxyvitamin D3, an active ligand of VDR. Also active on 25-hydroxyvitamin D2. Mechanistically, uses molecular oxygen inserting one oxygen atom into a substrate, and reducing the second into a water molecule, with two electrons provided by NADPH via FDXR/adrenodoxin reductase and FDX1/adrenodoxin. This is 25-hydroxyvitamin D-1 alpha hydroxylase, mitochondrial (Cyp27b1) from Mus musculus (Mouse).